An 811-amino-acid chain; its full sequence is G-type lectin S-receptor-like serine/threonine-protein kinase LECRK2 (811 aa).

The N-terminal stretch at 1-23 (MAPILFLPILQILLIYCTKSAQA) is a signal peptide. Residues 24–153 (QLNISIGSSL…DGATKWESFG (130 aa)) enclose the Bulb-type lectin domain. At 24–464 (QLNISIGSSL…DKKYWILGSS (441 aa)) the chain is on the extracellular side. Residues asparagine 26, asparagine 39, asparagine 59, asparagine 219, asparagine 226, asparagine 237, and asparagine 242 are each glycosylated (N-linked (GlcNAc...) asparagine). In terms of domain architecture, EGF-like; atypical spans 292-344 (PENICQTIQTKVGSGACGFNSYCTFDGTKNTTNCLCPQRYKFFDNERTYKGCR). 5 cysteine pairs are disulfide-bonded: cysteine 296/cysteine 314, cysteine 308/cysteine 325, cysteine 327/cysteine 343, cysteine 389/cysteine 411, and cysteine 393/cysteine 399. Residue asparagine 321 is glycosylated (N-linked (GlcNAc...) asparagine). One can recognise a PAN domain in the interval 352 to 436 (CDLDETAAMV…LQATVLLKVP (85 aa)). Residues 465 to 485 (LFFGSSVLVNFLLIFVLLFGT) form a helical membrane-spanning segment. Over 486-811 (YCSITSRKKT…DPSSYISSLA (326 aa)) the chain is Cytoplasmic. The Protein kinase domain occupies 521-795 (GGFHEVLGTG…KVMQMLDGAV (275 aa)). Residues 527–535 (LGTGASGIV) and lysine 551 each bind ATP. Residue aspartate 645 is the Proton acceptor of the active site.

The protein belongs to the protein kinase superfamily. Ser/Thr protein kinase family.

It is found in the membrane. The catalysed reaction is L-seryl-[protein] + ATP = O-phospho-L-seryl-[protein] + ADP + H(+). It catalyses the reaction L-threonyl-[protein] + ATP = O-phospho-L-threonyl-[protein] + ADP + H(+). Involved in resistance against the herbivorous insect brown planthopper (N.lugens, BPH). Member of the BPH3 (BPH resistance locus 3) cluster which contains LECRK1, LECRK2 and LECRK3. The polypeptide is G-type lectin S-receptor-like serine/threonine-protein kinase LECRK2 (Oryza sativa subsp. indica (Rice)).